The primary structure comprises 309 residues: Methionyl-tRNA formyltransferase (309 aa).

112–115 contacts (6S)-5,6,7,8-tetrahydrofolate; it reads SLLP.

This sequence belongs to the Fmt family.

The catalysed reaction is L-methionyl-tRNA(fMet) + (6R)-10-formyltetrahydrofolate = N-formyl-L-methionyl-tRNA(fMet) + (6S)-5,6,7,8-tetrahydrofolate + H(+). In terms of biological role, attaches a formyl group to the free amino group of methionyl-tRNA(fMet). The formyl group appears to play a dual role in the initiator identity of N-formylmethionyl-tRNA by promoting its recognition by IF2 and preventing the misappropriation of this tRNA by the elongation apparatus. This chain is Methionyl-tRNA formyltransferase, found in Bartonella tribocorum (strain CIP 105476 / IBS 506).